Here is a 78-residue protein sequence, read N- to C-terminus: Putative membrane protein insertion efficiency factor (78 aa).

The protein belongs to the UPF0161 family.

It localises to the cell membrane. Its function is as follows. Could be involved in insertion of integral membrane proteins into the membrane. This is Putative membrane protein insertion efficiency factor from Limosilactobacillus reuteri (strain DSM 20016) (Lactobacillus reuteri).